We begin with the raw amino-acid sequence, 386 residues long: EARP and GARP complex-interacting protein 1 (386 aa).

Position 1 is an N-acetylmethionine (Met1). WD repeat units follow at residues 132 to 172 (GAQG…SQAV), 182 to 222 (RGQL…QIYC), 226 to 266 (AHGQ…EPVK), and 270 to 310 (EHSH…SEPF). The segment at 312 to 332 (HLVDDDDVSDPEEHHTEKSKE) is disordered. Phosphoserine is present on Ser320. The span at 322-332 (PEEHHTEKSKE) shows a compositional bias: basic and acidic residues. Residues 344–384 (EHEDSVYAVDWASADPWLFASLSYDGRLVINRVPRALKYHI) form a WD 5 repeat.

It belongs to the WD repeat EIPR1 family. In terms of assembly, interacts with two multisubunit tethering complexes: EARP composed of VPS50, VPS51, VPS52 and VPS53 subunits and GARP complex composed of VPS51, VPS52, VPS53 and VPS54 subunits. Interacts with SNAP29. In terms of tissue distribution, ubiquitous. Highly expressed in brain, adipose tissue, spleen and kidney (at protein level).

The protein resides in the golgi apparatus. Its subcellular location is the trans-Golgi network. In terms of biological role, acts as a component of endosomal retrieval machinery that is involved in protein transport from early endosomes to either recycling endosomes or the trans-Golgi network. Mediates the recruitment of Golgi-associated retrograde protein (GARP) complex to the trans-Golgi network and controls early endosome-to-Golgi transport of internalized protein. Promotes the recycling of internalized transferrin receptor (TFRC) to the plasma membrane through interaction with endosome-associated recycling protein (EARP) complex. Controls proper insulin distribution and secretion, and retention of cargo in mature dense core vesicles. Required for the stability of the endosome-associated retrograde protein (EARP) complex subunits and for proper localization and association of EARP with membranes. The sequence is that of EARP and GARP complex-interacting protein 1 from Rattus norvegicus (Rat).